Reading from the N-terminus, the 255-residue chain is MSVISMKQLLEAGVHFGHQTRRWNPKMKPYIFTERNGIHVIDLQKTEKLVDDAYNYVKNASQEGAVVLFVGTKKQAAEAVKEEALRAGQYYVNHRWLGGMLTNWNTIQTRVTRLKEINKMEEEGTFEVLPKKEVVLLNKERERLEKFIGGIADMPRIPDVMYIVDPHAEQIAVKEAKTLGIPVVAMVDTNADPEPIDVVIPANDDAIRAVKLITAKMADAIIEGRQGEDAAEDFVAEEAASEESLEELAEIVEGK.

The interval 233–255 (DFVAEEAASEESLEELAEIVEGK) is disordered.

The protein belongs to the universal ribosomal protein uS2 family.

This Lactococcus lactis subsp. cremoris (strain SK11) protein is Small ribosomal subunit protein uS2.